Here is a 219-residue protein sequence, read N- to C-terminus: Ras-related protein Rab-3B (219 aa).

A2 is subject to N-acetylalanine. GTP-binding residues include S31, S32, V33, G34, K35, T36, S37, P49, and S53. Residue T36 participates in Mg(2+) binding. The short motif at 45 to 58 (DTFTPAFVSTVGID) is the Switch 1 element. Mg(2+) is bound by residues T54 and D77. The Switch 2 motif lies at 78–96 (TAGQERYRTITTAYYRGAM). G80 lines the GTP pocket. The residue at position 86 (T86) is a Phosphothreonine. The GTP site is built by N135, K136, D138, A166, and K167. Phosphoserine is present on residues S188 and S190. Residues C217 and C219 are each lipidated (S-geranylgeranyl cysteine). C219 is subject to Cysteine methyl ester.

This sequence belongs to the small GTPase superfamily. Rab family. In terms of assembly, interacts with RPH3A and RPH3AL. Interacts with RIMS1. Interacts with RIMS2. The GTP-bound form interacts with GAS8/DRC4 (via coiled-coil domains). Interacts with GDI2, and CHM; phosphorylation at Thr-86 disrupts these interactions. Interacts with MADD (via uDENN domain); the GTP-bound form is preferred for interaction. It depends on Mg(2+) as a cofactor. Post-translationally, phosphorylation of Thr-86 in the switch II region by LRRK2 prevents the association of RAB regulatory proteins, including CHM and RAB GDP dissociation inhibitor GDI2.

It is found in the cell membrane. Its subcellular location is the golgi apparatus. The enzyme catalyses GTP + H2O = GDP + phosphate + H(+). With respect to regulation, regulated by guanine nucleotide exchange factors (GEFs) which promote the exchange of bound GDP for free GTP. Regulated by GTPase activating proteins (GAPs) which increase the GTP hydrolysis activity. Inhibited by GDP dissociation inhibitors (GDIs) which prevent Rab-GDP dissociation. Functionally, the small GTPases Rab are key regulators of intracellular membrane trafficking, from the formation of transport vesicles to their fusion with membranes. Rabs cycle between an inactive GDP-bound form and an active GTP-bound form that is able to recruit to membranes different sets of downstream effectors directly responsible for vesicle formation, movement, tethering and fusion. The chain is Ras-related protein Rab-3B from Rattus norvegicus (Rat).